We begin with the raw amino-acid sequence, 207 residues long: Outer-membrane lipoprotein LolB (207 aa).

Positions 1–21 are cleaved as a signal peptide; the sequence is MPLPDFRFIRLLPLAALVLTA. Cysteine 22 carries N-palmitoyl cysteine lipidation. The S-diacylglycerol cysteine moiety is linked to residue cysteine 22.

The protein belongs to the LolB family. Monomer.

It localises to the cell outer membrane. In terms of biological role, plays a critical role in the incorporation of lipoproteins in the outer membrane after they are released by the LolA protein. The chain is Outer-membrane lipoprotein LolB from Escherichia coli O6:H1 (strain CFT073 / ATCC 700928 / UPEC).